A 72-amino-acid polypeptide reads, in one-letter code: ATP synthase subunit c (72 aa).

2 helical membrane-spanning segments follow: residues 4–24 (ALGA…GMGI) and 46–66 (LLFI…LIAF).

It belongs to the ATPase C chain family. F-type ATPases have 2 components, F(1) - the catalytic core - and F(0) - the membrane proton channel. F(1) has five subunits: alpha(3), beta(3), gamma(1), delta(1), epsilon(1). F(0) has three main subunits: a(1), b(2) and c(10-14). The alpha and beta chains form an alternating ring which encloses part of the gamma chain. F(1) is attached to F(0) by a central stalk formed by the gamma and epsilon chains, while a peripheral stalk is formed by the delta and b chains.

The protein resides in the cell membrane. Functionally, f(1)F(0) ATP synthase produces ATP from ADP in the presence of a proton or sodium gradient. F-type ATPases consist of two structural domains, F(1) containing the extramembraneous catalytic core and F(0) containing the membrane proton channel, linked together by a central stalk and a peripheral stalk. During catalysis, ATP synthesis in the catalytic domain of F(1) is coupled via a rotary mechanism of the central stalk subunits to proton translocation. Its function is as follows. Key component of the F(0) channel; it plays a direct role in translocation across the membrane. A homomeric c-ring of between 10-14 subunits forms the central stalk rotor element with the F(1) delta and epsilon subunits. This Syntrophomonas wolfei subsp. wolfei (strain DSM 2245B / Goettingen) protein is ATP synthase subunit c.